A 155-amino-acid chain; its full sequence is SsrA-binding protein (155 aa).

Belongs to the SmpB family.

The protein localises to the cytoplasm. Required for rescue of stalled ribosomes mediated by trans-translation. Binds to transfer-messenger RNA (tmRNA), required for stable association of tmRNA with ribosomes. tmRNA and SmpB together mimic tRNA shape, replacing the anticodon stem-loop with SmpB. tmRNA is encoded by the ssrA gene; the 2 termini fold to resemble tRNA(Ala) and it encodes a 'tag peptide', a short internal open reading frame. During trans-translation Ala-aminoacylated tmRNA acts like a tRNA, entering the A-site of stalled ribosomes, displacing the stalled mRNA. The ribosome then switches to translate the ORF on the tmRNA; the nascent peptide is terminated with the 'tag peptide' encoded by the tmRNA and targeted for degradation. The ribosome is freed to recommence translation, which seems to be the essential function of trans-translation. The chain is SsrA-binding protein from Halothermothrix orenii (strain H 168 / OCM 544 / DSM 9562).